The chain runs to 868 residues: Leucine--tRNA ligase (868 aa).

A 'HIGH' region motif is present at residues 42-52 (PYPSGKLHMGH). The 'KMSKS' region signature appears at 627 to 631 (KMSKS). Lysine 630 contacts ATP.

Belongs to the class-I aminoacyl-tRNA synthetase family.

The protein localises to the cytoplasm. The enzyme catalyses tRNA(Leu) + L-leucine + ATP = L-leucyl-tRNA(Leu) + AMP + diphosphate. The chain is Leucine--tRNA ligase from Pseudomonas putida (strain ATCC 47054 / DSM 6125 / CFBP 8728 / NCIMB 11950 / KT2440).